The primary structure comprises 101 residues: Urease subunit beta (101 aa).

Belongs to the urease beta subunit family. Heterotrimer of UreA (gamma), UreB (beta) and UreC (alpha) subunits. Three heterotrimers associate to form the active enzyme.

It localises to the cytoplasm. It carries out the reaction urea + 2 H2O + H(+) = hydrogencarbonate + 2 NH4(+). Its pathway is nitrogen metabolism; urea degradation; CO(2) and NH(3) from urea (urease route): step 1/1. The protein is Urease subunit beta of Dechloromonas aromatica (strain RCB).